Consider the following 523-residue polypeptide: Probable malate:quinone oxidoreductase (523 aa).

Belongs to the MQO family. Requires FAD as cofactor.

It catalyses the reaction (S)-malate + a quinone = a quinol + oxaloacetate. It functions in the pathway carbohydrate metabolism; tricarboxylic acid cycle; oxaloacetate from (S)-malate (quinone route): step 1/1. The protein is Probable malate:quinone oxidoreductase of Agrobacterium fabrum (strain C58 / ATCC 33970) (Agrobacterium tumefaciens (strain C58)).